Here is a 429-residue protein sequence, read N- to C-terminus: D-amino acid dehydrogenase (429 aa).

3-17 (VLILGSGVIGTTTAW) provides a ligand contact to FAD.

This sequence belongs to the DadA oxidoreductase family. The cofactor is FAD.

The enzyme catalyses a D-alpha-amino acid + A + H2O = a 2-oxocarboxylate + AH2 + NH4(+). The protein operates within amino-acid degradation; D-alanine degradation; NH(3) and pyruvate from D-alanine: step 1/1. Functionally, oxidative deamination of D-amino acids. The sequence is that of D-amino acid dehydrogenase from Xanthomonas campestris pv. campestris (strain B100).